The following is a 217-amino-acid chain: Ribonuclease T (217 aa).

The Exonuclease domain occupies 20–195 (VVVDVETAGF…YDTEKTAELF (176 aa)). Mg(2+) contacts are provided by aspartate 23, glutamate 25, histidine 182, and aspartate 187. The active-site Proton donor/acceptor is the histidine 182.

The protein belongs to the RNase T family. In terms of assembly, homodimer. Mg(2+) is required as a cofactor.

Trims short 3' overhangs of a variety of RNA species, leaving a one or two nucleotide 3' overhang. Responsible for the end-turnover of tRNA: specifically removes the terminal AMP residue from uncharged tRNA (tRNA-C-C-A). Also appears to be involved in tRNA biosynthesis. In Vibrio vulnificus (strain YJ016), this protein is Ribonuclease T.